Reading from the N-terminus, the 454-residue chain is Dihydrolipoyllysine-residue succinyltransferase component of 2-oxoglutarate dehydrogenase complex, mitochondrial (454 aa).

The N-terminal 68 residues, 1-68 (MLSRSRCVSR…RFFQTTAVCK (68 aa)), are a transit peptide targeting the mitochondrion. The Lipoyl-binding domain maps to 71-145 (VITVQTPAFA…EGGTPLFTLR (75 aa)). Ser82 carries the phosphoserine modification. Lys111 carries the post-translational modification N6-lipoyllysine. Positions 147–227 (TGAAPAKAKP…KGLRSEHREK (81 aa)) are disordered. Positions 149–163 (AAPAKAKPAETPAPA) are enriched in low complexity. Lys155 is subject to N6-acetyllysine. A compositionally biased stretch (pro residues) spans 186 to 197 (PPVPSPSQPPSS). Positions 198–217 (KPVSAIKPTAAPPLAEAGAA) are enriched in low complexity. N6-acetyllysine is present on residues Lys268, Lys273, Lys274, Lys278, and Lys308. Residues His425 and Asp429 contribute to the active site.

It belongs to the 2-oxoacid dehydrogenase family. In terms of assembly, the 2-oxoglutarate dehydrogenase complex is composed of OGDH (2-oxoglutarate dehydrogenase; E1), DLST (dihydrolipoamide succinyltransferase; E2), DLD (dihydrolipoamide dehydrogenase; E3) and the assembly factor KGD4. It contains multiple copies of the three enzymatic components (E1, E2 and E3). In the nucleus, the 2-oxoglutarate dehydrogenase complex associates with KAT2A. Interacts with ABHD11; this interaction maintains the functional lipoylation of the 2-oxoglutarate dehydrogenase complex. It depends on (R)-lipoate as a cofactor.

It localises to the mitochondrion matrix. It is found in the nucleus. The enzyme catalyses N(6)-[(R)-dihydrolipoyl]-L-lysyl-[protein] + succinyl-CoA = N(6)-[(R)-S(8)-succinyldihydrolipoyl]-L-lysyl-[protein] + CoA. It participates in amino-acid degradation; L-lysine degradation via saccharopine pathway; glutaryl-CoA from L-lysine: step 6/6. Its pathway is carbohydrate metabolism; tricarboxylic acid cycle. Its function is as follows. Dihydrolipoamide succinyltransferase (E2) component of the 2-oxoglutarate dehydrogenase complex. The 2-oxoglutarate dehydrogenase complex catalyzes the overall conversion of 2-oxoglutarate to succinyl-CoA and CO(2). The 2-oxoglutarate dehydrogenase complex is mainly active in the mitochondrion. A fraction of the 2-oxoglutarate dehydrogenase complex also localizes in the nucleus and is required for lysine succinylation of histones: associates with KAT2A on chromatin and provides succinyl-CoA to histone succinyltransferase KAT2A. In Mus musculus (Mouse), this protein is Dihydrolipoyllysine-residue succinyltransferase component of 2-oxoglutarate dehydrogenase complex, mitochondrial.